Consider the following 269-residue polypeptide: Major capsid protein P2 (269 aa).

In terms of assembly, homotrimer.

Its subcellular location is the virion. Its function is as follows. Major capsid protein. The chain is Major capsid protein P2 (II) from Pseudoalteromonas phage PM2 (Bacteriophage PM2).